Here is a 410-residue protein sequence, read N- to C-terminus: Benzene 1,2-dioxygenase system ferredoxin--NAD(+) reductase subunit (410 aa).

4–35 (HVAIIGNGVAGFTTAQALRAEGYEGRISLIGE) is a binding site for FAD. 145 to 173 (RLLIVGGGLIGCEVATTARKLGLSVTILE) lines the NAD(+) pocket.

The protein belongs to the bacterial ring-hydroxylating dioxygenase ferredoxin reductase family. As to quaternary structure, this dioxygenase system consists of four proteins: the two subunits of the hydroxylase component (BedC1 and BedC2), a ferredoxin (BedB) and a ferredoxin reductase (BedA). It depends on FAD as a cofactor.

It catalyses the reaction 2 reduced [2Fe-2S]-[ferredoxin] + NAD(+) + H(+) = 2 oxidized [2Fe-2S]-[ferredoxin] + NADH. It functions in the pathway aromatic compound metabolism; benzene degradation; catechol from benzene: step 1/2. Part of the electron transfer component of benzene 1,2-dioxygenase, transfers electrons from ferredoxin to NADH. This is Benzene 1,2-dioxygenase system ferredoxin--NAD(+) reductase subunit (bedA) from Pseudomonas putida (Arthrobacter siderocapsulatus).